The primary structure comprises 552 residues: Chromosomal replication initiator protein DnaA (552 aa).

The tract at residues 1-90 (MWNETWNEIT…FTVAVTVDPT (90 aa)) is domain I, interacts with DnaA modulators. Residues 90–210 (TLDVIQDLPH…KPAHDPDRNG (121 aa)) are domain II. The interval 113–213 (EHPHYSPVSQ…HDPDRNGSLN (101 aa)) is disordered. Over residues 155 to 170 (PQPSQSSQSAQQQPAQ) the composition is skewed to low complexity. The segment at 211 to 427 (SLNPRYTFDT…GAFIRVSAYA (217 aa)) is domain III, AAA+ region. Residues Gly-255, Gly-257, Lys-258, and Thr-259 each contribute to the ATP site. The tract at residues 428-552 (SLNEAPINMA…TQQIKSSDRA (125 aa)) is domain IV, binds dsDNA.

The protein belongs to the DnaA family. Oligomerizes as a right-handed, spiral filament on DNA at oriC.

The protein resides in the cytoplasm. In terms of biological role, plays an essential role in the initiation and regulation of chromosomal replication. ATP-DnaA binds to the origin of replication (oriC) to initiate formation of the DNA replication initiation complex once per cell cycle. Binds the DnaA box (a 9 base pair repeat at the origin) and separates the double-stranded (ds)DNA. Forms a right-handed helical filament on oriC DNA; dsDNA binds to the exterior of the filament while single-stranded (ss)DNA is stabiized in the filament's interior. The ATP-DnaA-oriC complex binds and stabilizes one strand of the AT-rich DNA unwinding element (DUE), permitting loading of DNA polymerase. After initiation quickly degrades to an ADP-DnaA complex that is not apt for DNA replication. Binds acidic phospholipids. This is Chromosomal replication initiator protein DnaA from Corynebacterium diphtheriae (strain ATCC 700971 / NCTC 13129 / Biotype gravis).